The chain runs to 899 residues: Auxin response factor 25 (899 aa).

Residues 1 to 20 are disordered; that stretch reads MKLSPPASADMPQALPENDG. The segment at residues 132–234 is a DNA-binding region (TF-B3); sequence FCKTLTASDT…QLLLGIRRAN (103 aa). Residues 546–564 show a composition bias toward low complexity; the sequence is RQHVLQEQSSQEMQQQLPS. Residues 546–586 form a disordered region; it reads RQHVLQEQSSQEMQQQLPSSDHHVADVASESGSAPQAQSSL. Residues 575–586 are compositionally biased toward polar residues; it reads ESGSAPQAQSSL. Positions 766–850 constitute a PB1 domain; sequence ATFVKVYKSG…WCIKILSPQE (85 aa).

It belongs to the ARF family. Homodimers and heterodimers. Expressed in roots, culms, leaves and young panicles.

It is found in the nucleus. Auxin response factors (ARFs) are transcriptional factors that bind specifically to the DNA sequence 5'-TGTCTC-3' found in the auxin-responsive promoter elements (AuxREs). The protein is Auxin response factor 25 (ARF25) of Oryza sativa subsp. japonica (Rice).